The primary structure comprises 676 residues: Long-chain-fatty-acid--CoA ligase 1 (676 aa).

Position 246 to 257 (246 to 257 (YTSGSTGLPKGV)) interacts with ATP. Residues 511–560 (DGWFRTGDVGELTPEGLLRIIDRKKNLVKTQNGEYIALEKLESRYRTSSL) carry the FACS motif.

This sequence belongs to the ATP-dependent AMP-binding enzyme family. Mg(2+) serves as cofactor.

The catalysed reaction is a long-chain fatty acid + ATP + CoA = a long-chain fatty acyl-CoA + AMP + diphosphate. Esterification, concomitant with transport, of exogenous long-chain fatty acids into metabolically active CoA thioesters for subsequent degradation or incorporation into phospholipids. It may supplement intracellular myristoyl-CoA pools from exogenous myristate. Preferentially acts on C12:0-C16:0 fatty acids with myristic and pentadecanic acid (C15:0) having the highest activities. Appears to play a role in the maintenance of cell viability during stationary phase. In Schizosaccharomyces pombe (strain 972 / ATCC 24843) (Fission yeast), this protein is Long-chain-fatty-acid--CoA ligase 1 (lcf1).